A 359-amino-acid chain; its full sequence is RuBisCO accumulation factor 1 (359 aa).

Positions 12 to 195 (LSPEETDALF…RQKIEQLLSD (184 aa)) are N-terminal alpha-helix. A C-terminal beta-sheet region spans residues 219–345 (PLLIPVAGSL…VLLVMRPKKI (127 aa)).

It belongs to the RAF family. Homodimer. Forms an RbcL(8)-Raf1(8) complex. Forms complexes of many stoichiometries with RbcL with and without RbcS. RbcX and Raf1 can bind simultaneously to RbcL.

It localises to the cytoplasm. A major RuBisCO chaperone. Acts after GroEL-GroES chaperonin to fold and/or assemble the large subunit of RuBisCO (ccbL, rbcL). Cooperates with RbcX in RbcL folding, plays the major role in assembly of dimers into RbcL(8)-Raf1(8) intermediate complexes. RbcS replaces Raf1, leading to holoenzyme formation. In terms of biological role, raf1 and RbcX are probably functionally redundant; it has been suggested they may cooperate. The chain is RuBisCO accumulation factor 1 from Picosynechococcus sp. (strain ATCC 27264 / PCC 7002 / PR-6) (Agmenellum quadruplicatum).